The sequence spans 65 residues: Large ribosomal subunit protein bL35 (65 aa).

Residues 1-16 (MPKMKTKSGAKKRFRV) are compositionally biased toward basic residues. Residues 1–25 (MPKMKTKSGAKKRFRVRPGGTVKRG) form a disordered region.

It belongs to the bacterial ribosomal protein bL35 family.

The protein is Large ribosomal subunit protein bL35 of Herminiimonas arsenicoxydans.